Reading from the N-terminus, the 529-residue chain is Type I inositol polyphosphate 5-phosphatase 5 (529 aa).

2 catalytic regions span residues 371–386 (DRVL…VALT) and 451–466 (KRRT…WKGE).

The protein belongs to the inositol polyphosphate 5-phosphatase family.

In terms of biological role, may be involved in the regulation of root hairs development. Required for restricting both the size of the root-hair initiation site and the width of the root hairs during the transition to tip growth, but is not required for normal subsequent tip growth. The polypeptide is Type I inositol polyphosphate 5-phosphatase 5 (Arabidopsis thaliana (Mouse-ear cress)).